A 318-amino-acid chain; its full sequence is Ankyrin repeat and SOCS box protein 7 (318 aa).

7 ANK repeats span residues 13–42 (QEESQIQAAVAAGDVHTVRKMLEQGYSPNG), 46–75 (NGWTLLHFSAARGKERCVRVFLEHGADPTV), 80–109 (GGFTALHYAAMHGRARIARLMLESEYRSDI), 116–145 (DGWTPLHVAAHYGRDSFVRLLLEFKAEVDP), 149–178 (KGTTPLQLAIIRERSSCVKILLDHNANIDI), 180–208 (NGFLLRYAVIKSNHSYCRMFLQRGADTNL), and 213–242 (DGQTPLHLSALRDDVLCARMLYNYGADTNT). The 54-residue stretch at 265–318 (LDFLQEVTRQPRNLQDLCRIKIRQCIGLQNLKLLDELPIAKVMKDYLKHKSDDI) folds into the SOCS box domain.

Belongs to the ankyrin SOCS box (ASB) family. Interacts with CUL5. Interacts with RNF7. Interacts with PSRC1.

It functions in the pathway protein modification; protein ubiquitination. Probable substrate-recognition component of a SCF-like ECS (Elongin-Cullin-SOCS-box protein) E3 ubiquitin-protein ligase complex which mediates the ubiquitination and subsequent proteasomal degradation of target proteins. Plays a role in spindle dynamics and genome integrity by targeting the mitotic progression protein PSRC1 for proteasomal degradation in a cell cycle-dependent manner. Also participates in meiosis by mediating the proper attachment between kinetochores and microtubules. The sequence is that of Ankyrin repeat and SOCS box protein 7 (ASB7) from Pongo abelii (Sumatran orangutan).